Reading from the N-terminus, the 183-residue chain is Large ribosomal subunit protein bL17 (183 aa).

Residues 130–150 are compositionally biased toward basic and acidic residues; the sequence is GTKFAKDEKAKAEATEAKAEE. The tract at residues 130 to 183 is disordered; sequence GTKFAKDEKAKAEATEAKAEETTETTESTEAESTEAPAEEAKAEDTAAEKKDES. Over residues 151–162 the composition is skewed to acidic residues; sequence TTETTESTEAES. Positions 168–183 are enriched in basic and acidic residues; the sequence is EEAKAEDTAAEKKDES.

Belongs to the bacterial ribosomal protein bL17 family. As to quaternary structure, part of the 50S ribosomal subunit. Contacts protein L32.

The sequence is that of Large ribosomal subunit protein bL17 from Saccharopolyspora erythraea (strain ATCC 11635 / DSM 40517 / JCM 4748 / NBRC 13426 / NCIMB 8594 / NRRL 2338).